Here is a 473-residue protein sequence, read N- to C-terminus: UDP-N-acetylmuramate--L-alanine ligase (473 aa).

G119–T125 serves as a coordination point for ATP.

The protein belongs to the MurCDEF family.

It localises to the cytoplasm. The catalysed reaction is UDP-N-acetyl-alpha-D-muramate + L-alanine + ATP = UDP-N-acetyl-alpha-D-muramoyl-L-alanine + ADP + phosphate + H(+). It functions in the pathway cell wall biogenesis; peptidoglycan biosynthesis. Cell wall formation. This is UDP-N-acetylmuramate--L-alanine ligase from Caulobacter vibrioides (strain NA1000 / CB15N) (Caulobacter crescentus).